Here is a 559-residue protein sequence, read N- to C-terminus: Hepatocyte nuclear factor 1-alpha (559 aa).

An HNF-p1 domain is found at 13–44 (GPGRLSALQEQLIWALLGSGLSREVLVHALGE). The interval 14–43 (PGRLSALQEQLIWALLGSGLSREVLVHALG) is dimerization. Positions 49-62 (RVTPGAEKGDRGDG) are enriched in basic and acidic residues. Residues 49–73 (RVTPGAEKGDRGDGESSEEGEMDFP) form a disordered region. One can recognise a POU-specific atypical domain in the interval 78–173 (QELEALAPEE…ISQQFTNARH (96 aa)). Interaction with DNA regions lie at residues 121 to 123 (QRE), 134 to 140 (HLSQHLN), 146 to 149 (KNQK), 192 to 195 (RFKW), 252 to 254 (RVY), and 259 to 262 (NRRK). The Nuclear localization signal motif lies at 186-194 (RKGRRNRFK). Positions 188-268 (GRRNRFKWGP…NRRKEEAFRH (81 aa)) form a DNA-binding region, homeobox; HNF1-type. A disordered region spans residues 492 to 559 (TDPEEQTDQP…IPAQMVSTAQ (68 aa)). The span at 499-522 (DQPIQEDSLHLQSPSPVPVSSGNL) shows a compositional bias: polar residues.

This sequence belongs to the HNF1 homeobox family. Binds DNA as a dimer. As to expression, expressed in liver, intestine, spleen and kidney.

The protein resides in the nucleus. Its function is as follows. Transcriptional activator that regulates the tissue specific expression of multiple genes, especially in pancreas and liver. Binds to the promoter of the albumin gene. This is Hepatocyte nuclear factor 1-alpha (hnf1a) from Salmo salar (Atlantic salmon).